A 1969-amino-acid chain; its full sequence is MPGEQMDPTGSQLDSDFSQQDTPCLIIEDSQPESQVLEEDAGSHFSVLSRHLPNLQMHKENPVLDIVSNPEQSAVEQGDSNSSFNEHLKEKKASDPVESSHLGTSGSISQVIERLPQPNRTSSALAVTVEAASLPEEEKEEEELEEEKEGVGANAPGADSLAAEDSASSQLGFGVLELSQSQDVEEHTVPYDVNQEHLQLVTTNSGSSPLSDVDASTAIKCEEQPTEDIAMIEQPSKDIPVTVQPGKGIHVVEEQNLPLVRSEDRPSSPQVSVAAVETKEQVPARELLEEGPQVQPSSEPEVSSTQEDLFDQSSKTASDGCSTPSREEGGCSPVSTPATTLQLLQLSGQKPLVQESLSTNSSDLVAPSPDAFRSTPFIVPSSPTEQGGRKDEPMDMSVIPVGGEPFQKLHDDEAMETEKPLLPSQPAVSPQASTPVSRSTPVFTPGSLPIPSQPEFSHDIFIPSPSLEEPSDDVKKGGGLHSSSLTVECSKTSESEPKNFTDDLGLSMTGDSCKLMLSTSEYSQSSKMESLGSPRTEEDRENTQIDDTEPLSPVSNSKLPADSENVLVTPSQDDQVEMSQNVDKAKEDETEDRGDCKGREDAVAEDVCIDLTCDSGSQAVPSPATRSEALSSVLDQEEAMDTKEHHPEEGFSGSEVEEVPETPCGSHREEPKEEPMESIPLHLSLTETQSEALCLQKEAPKEECPEAMEVETSVISIDSPQKLQVLDQELEHKDPDTWEEATSEDSSVVIVDVKEPSPRADVSCEPLEEVEKCSDSQSWEGVAPEEEPCAENRLDTPEEKRIECDGDSKAETTEKDAVTEDSPQPPLPSVRDEPVRPDQETQQPQVQEKESPVTVDAEVADDKQLGPEGACQQLEKAPACASQSFCESSSETPFHFTLPKEGDIIPPLTGATPPLIGHLKLEPKRHSTPIGISNYPESTIATSDVTSESMVEINDPLLGNEKGDSESAPEMDGKLSLKMKLVSPETEASEESLQFSLEKPTTAERKNGSTAIAEPVASLQKPVPVFGCIYEAQQEKEAQSEAPPSAPDRANLLHFPSAQEEDKERPDVTPKLRQSEQPVKPVGPVMDDAAPEDSASPVSQQRASQEQRASQEPFSPAEDVMETDLLEGLAANQDRPSKMLMDRPTQSNIGIQTVDHSLCAPETVSAATQTVKSVCEQGTSTAEQNSGKQDATVQTERGSGEKPASAPVDDTESLHSQGEEEFEMPQPPHGHVLHRHMRTIREVRTLVTRVITDVYYVDGTEVERKVTEETEEPIVECQECETEVSPSQTGGSSGDLGDISSFSSKASSSHHTSSGTSLSAIHSSGSSGRGAGPLKGKASGTEAADFALPSSRGGPGKLSPRKGISQTGAPVCEEDGDAGLGIRQGGKAPVTPRGRGRRGRPPSRTTGTRETVVSGPLGVEDISPSMSPDDKSFTRIMPRVPDSTKRTDASSSTLRRSDSPEIPFQAATGSSDGLDSSSSGNSFVGLRVVAKWSSNGYFYSGKITRDVGAGKYKLLFDDGYECDVLGKDILLCDPIPLDTEVTALSEDEYFSAGVVKGHRKESGELYYSIEKEGQRKWYKRMAVILSLEQGNRLREQYGLGPYEAVTPLTKAADISLDNLVEGKRKRRSNISSPVTPTAASSSSTTPTRKATESPRASTGVPSGKRKLPTSEEERSPAKRGRKSATVKPGTVGAAEFVSPCETGDNIGEPSVLEEPRGPLPLNKTLFLGYAFLLTMATTSDKLASRSKLLDGPTGSSEEEEEFLEIPPFNKQYTECQLRAGAGYILEDFNEAQCNTAYQCLLIADQHCRTRKYFLCLASGIPCVSHVWVHDSCHANQLQNYRNYLLPAGYSLEEQRILDWQPRENPFQNLKVLLVSDQQQNFLELWSEILMTGGAASVKQHHSSAHNKDIALGVFDVVVTDPSCPASVLKCAEALQLPVVSQEWVIQCLIVGERIGFKQHPKYKHDYVSH.

The interval 1–24 is disordered; sequence MPGEQMDPTGSQLDSDFSQQDTPC. Residues 8–22 show a composition bias toward polar residues; it reads PTGSQLDSDFSQQDT. Residues serine 30, serine 68, and serine 73 each carry the phosphoserine modification. The segment at 67 to 168 is disordered; that stretch reads VSNPEQSAVE…DSLAAEDSAS (102 aa). Residues 69-85 are compositionally biased toward polar residues; it reads NPEQSAVEQGDSNSSFN. Over residues 86–95 the composition is skewed to basic and acidic residues; sequence EHLKEKKASD. Polar residues predominate over residues 101–110; it reads HLGTSGSISQ. Residue serine 109 is modified to Phosphoserine. Over residues 135-148 the composition is skewed to acidic residues; that stretch reads PEEEKEEEELEEEK. Residues 158 to 168 show a composition bias toward low complexity; it reads ADSLAAEDSAS. Phosphoserine occurs at positions 169, 179, and 181. A Glycyl lysine isopeptide (Lys-Gly) (interchain with G-Cter in SUMO1); alternate cross-link involves residue lysine 220. A Glycyl lysine isopeptide (Lys-Gly) (interchain with G-Cter in SUMO2); alternate cross-link involves residue lysine 220. Disordered stretches follow at residues 254 to 337, 352 to 599, and 614 to 707; these read EQNL…VSTP, LVQE…CKGR, and DSGS…CPEA. Residues serine 267 and serine 268 each carry the phosphoserine modification. Positions 277–288 are enriched in basic and acidic residues; that stretch reads ETKEQVPARELL. Residues 294-324 are compositionally biased toward polar residues; the sequence is VQPSSEPEVSSTQEDLFDQSSKTASDGCSTP. Serine 297 is modified (phosphoserine). Residue threonine 305 is modified to Phosphothreonine. 3 positions are modified to phosphoserine: serine 368, serine 382, and serine 397. A compositionally biased stretch (basic and acidic residues) spans 407 to 419; it reads QKLHDDEAMETEK. Positions 426-442 are enriched in polar residues; the sequence is PAVSPQASTPVSRSTPV. A phosphoserine mark is found at serine 429, serine 452, and serine 464. A compositionally biased stretch (polar residues) spans 481-490; it reads HSSSLTVECS. The segment covering 491–501 has biased composition (basic and acidic residues); sequence KTSESEPKNFT. Serine 507, serine 518, serine 523, and serine 525 each carry phosphoserine. Polar residues predominate over residues 517–528; that stretch reads LSTSEYSQSSKM. A phosphothreonine mark is found at threonine 543 and threonine 548. Serine 552 and serine 579 each carry phosphoserine. Polar residues predominate over residues 566–582; it reads VLVTPSQDDQVEMSQNV. The span at 583–599 shows a compositional bias: basic and acidic residues; sequence DKAKEDETEDRGDCKGR. A compositionally biased stretch (polar residues) spans 614–634; it reads DSGSQAVPSPATRSEALSSVL. Phosphoserine is present on residues serine 622, serine 627, serine 631, and serine 632. Basic and acidic residues predominate over residues 640 to 649; sequence MDTKEHHPEE. Position 662 is a phosphothreonine (threonine 662). The segment covering 666-675 has biased composition (basic and acidic residues); sequence SHREEPKEEP. A phosphoserine mark is found at serine 684, serine 716, serine 719, and serine 763. Residues 754–870 are disordered; it reads KEPSPRADVS…DDKQLGPEGA (117 aa). A compositionally biased stretch (basic and acidic residues) spans 790–818; sequence AENRLDTPEEKRIECDGDSKAETTEKDAV. Serine 822 is subject to Phosphoserine. Residues 830–839 are compositionally biased toward basic and acidic residues; sequence VRDEPVRPDQ. Threonine 912 bears the Phosphothreonine mark. Lysine 920 is covalently cross-linked (Glycyl lysine isopeptide (Lys-Gly) (interchain with G-Cter in SUMO2)). Residues 927–1017 are disordered; sequence STPIGISNYP…GSTAIAEPVA (91 aa). Polar residues predominate over residues 935–949; the sequence is YPESTIATSDVTSES. Residues 961–975 show a composition bias toward basic and acidic residues; the sequence is EKGDSESAPEMDGKL. Residue serine 965 is modified to Phosphoserine. Lysine 974 is covalently cross-linked (Glycyl lysine isopeptide (Lys-Gly) (interchain with G-Cter in SUMO2)). Residue serine 1018 is modified to Phosphoserine. 3 disordered regions span residues 1034–1144, 1178–1231, and 1267–1478; these read QEKE…MDRP, GTST…PHGH, and TEET…DSSS. The segment covering 1060-1074 has biased composition (basic and acidic residues); that stretch reads EEDKERPDVTPKLRQ. 2 positions are modified to phosphoserine: serine 1075 and serine 1096. A compositionally biased stretch (low complexity) spans 1099–1112; that stretch reads SQQRASQEQRASQE. The residue at position 1115 (serine 1115) is a Phosphoserine. Polar residues predominate over residues 1178–1197; sequence GTSTAEQNSGKQDATVQTER. The residue at position 1211 (threonine 1211) is a Phosphothreonine. Phosphoserine is present on residues serine 1213 and serine 1216. A compositionally biased stretch (acidic residues) spans 1269 to 1282; sequence ETEEPIVECQECET. The span at 1295–1326 shows a compositional bias: low complexity; the sequence is DLGDISSFSSKASSSHHTSSGTSLSAIHSSGS. Serine 1314 is subject to Phosphoserine. An Omega-N-methylarginine modification is found at arginine 1329. A Phosphoserine modification is found at serine 1339. An Omega-N-methylarginine modification is found at arginine 1352. The residue at position 1359 (serine 1359) is a Phosphoserine. Lysine 1362 is covalently cross-linked (Glycyl lysine isopeptide (Lys-Gly) (interchain with G-Cter in SUMO2)). Residue serine 1365 is modified to Phosphoserine. The GAR motif lies at 1393–1400; sequence RGRGRRGR. 2 positions are modified to phosphoserine: serine 1423 and serine 1427. A Glycyl lysine isopeptide (Lys-Gly) (interchain with G-Cter in SUMO1); alternate cross-link involves residue lysine 1431. A Glycyl lysine isopeptide (Lys-Gly) (interchain with G-Cter in SUMO2); alternate cross-link involves residue lysine 1431. Phosphoserine occurs at positions 1457, 1459, 1470, and 1471. Positions 1469 to 1478 are enriched in low complexity; the sequence is GSSDGLDSSS. Positions 1481–1600 are tudor-like; sequence NSFVGLRVVA…NRLREQYGLG (120 aa). The interval 1492-1520 is interaction with dimethylated histone H4; sequence WSSNGYFYSGKITRDVGAGKYKLLFDDGY. Lysine 1560 is covalently cross-linked (Glycyl lysine isopeptide (Lys-Gly) (interchain with G-Cter in SUMO1); alternate). Residue lysine 1560 forms a Glycyl lysine isopeptide (Lys-Gly) (interchain with G-Cter in SUMO2); alternate linkage. The short motif at 1601–1628 is the UDR element; that stretch reads PYEAVTPLTKAADISLDNLVEGKRKRRS. Threonine 1606 is modified (phosphothreonine). A phosphoserine mark is found at serine 1615, serine 1628, and serine 1632. Residues 1624 to 1715 form a disordered region; sequence RKRRSNISSP…IGEPSVLEEP (92 aa). The segment covering 1631–1648 has biased composition (low complexity); it reads SSPVTPTAASSSSTTPTR. Phosphothreonine is present on residues threonine 1635 and threonine 1645. Serine 1653, serine 1670, and serine 1675 each carry phosphoserine. Lysine 1682 participates in a covalent cross-link: Glycyl lysine isopeptide (Lys-Gly) (interchain with G-Cter in ubiquitin). Residues serine 1698 and serine 1756 each carry the phosphoserine modification. BRCT domains lie at 1749 to 1845 and 1861 to 1961; these read LDGP…NYLL and PREN…QHPK.

As to quaternary structure, homoligomer. Interacts with p53/TP53 (via the central domain). Interacts with DCLRE1C. Interacts with histone H2AX and this requires phosphorylation of H2AX on 'Ser-139'. Interacts with histone H4 that has been dimethylated at 'Lys-20' (H4K20me2). Has low affinity for histone H4 containing monomethylated 'Lys-20' (H4K20me1). Does not bind histone H4 containing unmethylated or trimethylated 'Lys-20' (H4K20me3). Has low affinity for histone H3 that has been dimethylated on 'Lys-79'. Has very low affinity for histone H3 that has been monomethylated on 'Lys-79' (in vitro). Does not bind unmethylated histone H3. Interacts with histone H2A monoubiquitinated at 'Lys-15' (H2AK15Ub). Interacts with PWWP3A/EXPAND1. Interacts with CHEK2; modulates CHEK2 phosphorylation at 'Thr-68' in response to infrared. Interacts with MSL1; this interaction may be required for MSL1 DNA repair activity, but not for histone acetyltransferase activity. Interacts (when phosphorylated by ATM) with RIF1. Interacts (via the Tudor-like domain) with NUDT16L1/TIRR; interaction masks the Tudor-like domain and prevents recruitment to chromatin. Interacts with PAXIP1. Interacts with IFI202A. Interacts with SHLD2. Interacts (when phosphorylated) with TOPBP1. Interacts with GFI1; promoting methylation by PRMT1. Interacts with (phosphorylated) DYNLL1; specifically binds DYNLL1 phosphorylated at 'Ser-88' and promotes its recruitment to double stand breaks (DSBs). Phosphorylated at basal level in the absence of DNA damage. Phosphorylated by ATM in response to DNA damage: phosphorylation at different sites promotes interaction with different set of proteins: phosphorylation at the N-terminus by ATM (residues from 11-181) promotes interaction with PAXIP1 and non-homologous end joining (NHEJ) of dysfunctional telomeres. Phosphorylation by ATM at residues that are located more C-terminus (residues 300-650) leads to promote interaction with RIF1. Interaction with RIF1 leads to disrupt interaction with NUDT16L1/TIRR. Phosphorylation at Thr-1606 and Ser-1615 in the UDR motif blocks interaction with H2AK15ub. Dephosphorylated by PPP4C. Hyperphosphorylation during mitosis correlates with its exclusion from chromatin and DNA lesions. Hyperphosphorylated in an ATR-dependent manner in response to DNA damage induced by UV irradiation. Dephosphorylated by PPP5C. Phosphorylation at Ser-368 and Thr-662 promotes interaction with TOPBP1. Phosphorylated by VRK1. Post-translationally, asymmetrically dimethylated on Arg residues by PRMT1. Methylation is required for DNA binding. In terms of processing, monoubiquitinated at Lys-1682 by MSL2 is reponse to DNA damage, leading to its stabilization.

It is found in the nucleus. The protein resides in the chromosome. Its subcellular location is the centromere. The protein localises to the kinetochore. Functionally, double-strand break (DSB) repair protein involved in response to DNA damage, telomere dynamics and class-switch recombination (CSR) during antibody genesis. Plays a key role in the repair of double-strand DNA breaks (DSBs) in response to DNA damage by promoting non-homologous end joining (NHEJ)-mediated repair of DSBs and specifically counteracting the function of the homologous recombination (HR) repair protein BRCA1. In response to DSBs, phosphorylation by ATM promotes interaction with RIF1 and dissociation from NUDT16L1/TIRR, leading to recruitment to DSBs sites. Recruited to DSBs sites by recognizing and binding histone H2A monoubiquitinated at 'Lys-15' (H2AK15Ub) and histone H4 dimethylated at 'Lys-20' (H4K20me2), two histone marks that are present at DSBs sites. Required for immunoglobulin class-switch recombination (CSR) during antibody genesis, a process that involves the generation of DNA DSBs. Participates in the repair and the orientation of the broken DNA ends during CSR. In contrast, it is not required for classic NHEJ and V(D)J recombination. Promotes NHEJ of dysfunctional telomeres. The sequence is that of TP53-binding protein 1 from Mus musculus (Mouse).